We begin with the raw amino-acid sequence, 228 residues long: uncharacterized protein (228 aa).

Residue 21–28 (GMIALGKT) participates in ATP binding.

This is an uncharacterized protein from Mycoplasma genitalium (strain ATCC 33530 / DSM 19775 / NCTC 10195 / G37) (Mycoplasmoides genitalium).